Consider the following 386-residue polypeptide: Phosphomevalonate dehydratase large subunit (386 aa).

(R)-5-phosphomevalonate-binding residues include glycine 48, valine 49, serine 50, asparagine 53, arginine 63, asparagine 79, and proline 80. Residue cysteine 110 participates in [4Fe-4S] cluster binding. The (R)-5-phosphomevalonate site is built by glutamate 129 and serine 130. Cysteine 283 and cysteine 342 together coordinate [4Fe-4S] cluster. Lysine 361 contacts (R)-5-phosphomevalonate.

Belongs to the AcnX type II large subunit family. As to quaternary structure, heterodimer composed of a large subunit (PMDh-L) and a small subunit (PMDh-S). [4Fe-4S] cluster serves as cofactor.

The enzyme catalyses (R)-5-phosphomevalonate = (2E)-3-methyl-5-phosphooxypent-2-enoate + H2O. The protein operates within isoprenoid biosynthesis; isopentenyl diphosphate biosynthesis via mevalonate pathway. In terms of biological role, component of a hydro-lyase that catalyzes the dehydration of mevalonate 5-phosphate (MVA5P) to form trans-anhydromevalonate 5-phosphate (tAHMP). Involved in the archaeal mevalonate (MVA) pathway, which provides fundamental precursors for isoprenoid biosynthesis, such as isopentenyl diphosphate (IPP) and dimethylallyl diphosphate (DMAPP). In Thermococcus kodakarensis (strain ATCC BAA-918 / JCM 12380 / KOD1) (Pyrococcus kodakaraensis (strain KOD1)), this protein is Phosphomevalonate dehydratase large subunit.